Consider the following 75-residue polypeptide: Brevinin-2SN2 (75 aa).

A signal peptide spans M1–C22. A propeptide spans E23–E40 (removed in mature form). A disulfide bridge connects residues C69 and C75.

Belongs to the frog skin active peptide (FSAP) family. Brevinin subfamily. Expressed by the skin glands.

Its subcellular location is the secreted. In terms of biological role, antimicrobial peptide. Active against some Gram-negative and a variety of Gram-positive bacterial strains. Active against fungus C.glabrata 090902 but not against C.albicans ATCC 10231. Shows hemolytic activity against human erythrocytes. The chain is Brevinin-2SN2 from Sylvirana spinulosa (Fine-spined frog).